A 225-amino-acid chain; its full sequence is Uridylate kinase (225 aa).

9-10 (GS) is a binding site for ATP. Glycine 46 contributes to the UMP binding site. The ATP site is built by glycine 47 and arginine 51. UMP is bound by residues aspartate 67 and 115 to 121 (THPAHTT). Residues threonine 141, asparagine 142, tyrosine 147, and aspartate 150 each contribute to the ATP site.

The protein belongs to the UMP kinase family. Homohexamer.

It localises to the cytoplasm. It catalyses the reaction UMP + ATP = UDP + ADP. Its pathway is pyrimidine metabolism; CTP biosynthesis via de novo pathway; UDP from UMP (UMPK route): step 1/1. Its activity is regulated as follows. Inhibited by UTP. In terms of biological role, catalyzes the reversible phosphorylation of UMP to UDP. This chain is Uridylate kinase, found in Methanococcus maripaludis (strain C7 / ATCC BAA-1331).